We begin with the raw amino-acid sequence, 152 residues long: ARL14 effector protein-like (152 aa).

Positions Met-1–Thr-16 are enriched in polar residues. The tract at residues Met-1–Ile-27 is disordered.

This Mus musculus (Mouse) protein is ARL14 effector protein-like (Arl14epl).